Here is a 100-residue protein sequence, read N- to C-terminus: Urease subunit gamma (100 aa).

Belongs to the urease gamma subunit family. Heterotrimer of UreA (gamma), UreB (beta) and UreC (alpha) subunits. Three heterotrimers associate to form the active enzyme.

The protein localises to the cytoplasm. It carries out the reaction urea + 2 H2O + H(+) = hydrogencarbonate + 2 NH4(+). The protein operates within nitrogen metabolism; urea degradation; CO(2) and NH(3) from urea (urease route): step 1/1. In Pseudomonas fluorescens (strain ATCC BAA-477 / NRRL B-23932 / Pf-5), this protein is Urease subunit gamma.